Here is a 119-residue protein sequence, read N- to C-terminus: Large ribosomal subunit protein uL18 (119 aa).

A disordered region spans residues 1–20 (MSQIDKAARRQKIKARSRAT). The span at 9–19 (RRQKIKARSRA) shows a compositional bias: basic residues.

It belongs to the universal ribosomal protein uL18 family. In terms of assembly, part of the 50S ribosomal subunit; part of the 5S rRNA/L5/L18/L25 subcomplex. Contacts the 5S and 23S rRNAs.

In terms of biological role, this is one of the proteins that bind and probably mediate the attachment of the 5S RNA into the large ribosomal subunit, where it forms part of the central protuberance. This Chlorobaculum parvum (strain DSM 263 / NCIMB 8327) (Chlorobium vibrioforme subsp. thiosulfatophilum) protein is Large ribosomal subunit protein uL18.